Consider the following 397-residue polypeptide: Succinyl-diaminopimelate desuccinylase (397 aa).

Residue histidine 73 coordinates Zn(2+). Aspartate 75 is an active-site residue. Residue aspartate 106 participates in Zn(2+) binding. Glutamate 140 functions as the Proton acceptor in the catalytic mechanism. Residues glutamate 141, glutamate 169, and histidine 366 each contribute to the Zn(2+) site.

This sequence belongs to the peptidase M20A family. DapE subfamily. In terms of assembly, homodimer. Zn(2+) is required as a cofactor. The cofactor is Co(2+).

It carries out the reaction N-succinyl-(2S,6S)-2,6-diaminopimelate + H2O = (2S,6S)-2,6-diaminopimelate + succinate. Its pathway is amino-acid biosynthesis; L-lysine biosynthesis via DAP pathway; LL-2,6-diaminopimelate from (S)-tetrahydrodipicolinate (succinylase route): step 3/3. Functionally, catalyzes the hydrolysis of N-succinyl-L,L-diaminopimelic acid (SDAP), forming succinate and LL-2,6-diaminopimelate (DAP), an intermediate involved in the bacterial biosynthesis of lysine and meso-diaminopimelic acid, an essential component of bacterial cell walls. The protein is Succinyl-diaminopimelate desuccinylase of Sinorhizobium medicae (strain WSM419) (Ensifer medicae).